We begin with the raw amino-acid sequence, 215 residues long: Adenylate kinase (215 aa).

Position 10–15 (10–15 (GAGKGT)) interacts with ATP. The segment at 30 to 59 (STGDIFRKNIKEKTELGQKVEGLLAQGKLV) is NMP. AMP contacts are provided by residues threonine 31, arginine 36, 57-59 (KLV), 85-88 (GFPR), and glutamine 92. The tract at residues 126–163 (GRRVCPSCGASYHIDNNPTKVDGICDACQTPVIQREDD) is LID. Residue arginine 127 participates in ATP binding. 2 residues coordinate Zn(2+): cysteine 130 and cysteine 133. 136-137 (SY) contributes to the ATP binding site. Positions 150 and 153 each coordinate Zn(2+). Residues arginine 160 and arginine 171 each contribute to the AMP site. ATP is bound at residue leucine 199.

The protein belongs to the adenylate kinase family. Monomer.

Its subcellular location is the cytoplasm. It carries out the reaction AMP + ATP = 2 ADP. The protein operates within purine metabolism; AMP biosynthesis via salvage pathway; AMP from ADP: step 1/1. Its function is as follows. Catalyzes the reversible transfer of the terminal phosphate group between ATP and AMP. Plays an important role in cellular energy homeostasis and in adenine nucleotide metabolism. In Finegoldia magna (strain ATCC 29328 / DSM 20472 / WAL 2508) (Peptostreptococcus magnus), this protein is Adenylate kinase.